The chain runs to 167 residues: Protein MIX23 (167 aa).

Residues 81-108 (QLDQDRNTSKSPLKSQQQLPSSSTTQVS) form a disordered region. Residues 89–106 (SKSPLKSQQQLPSSSTTQ) are compositionally biased toward low complexity.

The protein belongs to the MIX23 family.

In Schizosaccharomyces pombe (strain 972 / ATCC 24843) (Fission yeast), this protein is Protein MIX23 (cid2).